The sequence spans 453 residues: MTNNNDPKCVVIEEPDDVPVKPPKIFDFTDWPFEIPDIFKRKELSYNYNYDLATSKSLMIVRMIFKWRGSLWQAVYKELIVWICAYSLVSVIYRFALTRSQKDIFERFGEYCDARMGYLPLNFVLGFFCNIIIRRWLKLYTSLGNIDNIALFVSAYVRGTDDRARQIRRNIIRYCVISQCLVFRDIHVGVRRRFPTLEAVAQAGIMLPHELEKFNSIKSRYQKYWVSFNWALELLNVAKTEKSIDGDNARNAIAQEISKFRSALTTVSMYDWVPIPLMYPQLVNMAVHTYFFLCIFTRQFFISADAHNKTEVDLYIPFMTIIEFIFYMGWLKVAMELLNPFGEDADDFDCNLLIDRNLAIGLTSVDDAYDQLPEVKPDVFTGGSVKPLDSDDTRSLKYHFGSAAQMEEISYLKKEENKMIAAGKKPNKLKLWVKSVRRKRFETSATQPSFPIP.

Helical transmembrane passes span 78-98, 113-133, 275-295, and 314-334; these read ELIV…FALT, DARM…NIII, IPLM…FLCI, and LYIP…LKVA.

It belongs to the anion channel-forming bestrophin (TC 1.A.46) family. Calcium-sensitive chloride channel subfamily. Forms oligomers.

It is found in the cell membrane. Its function is as follows. Forms chloride channels. The sequence is that of Bestrophin homolog 5 (best-5) from Caenorhabditis elegans.